The sequence spans 124 residues: Small ribosomal subunit protein uS12 (124 aa).

The residue at position 89 (Asp89) is a 3-methylthioaspartic acid.

Belongs to the universal ribosomal protein uS12 family. Part of the 30S ribosomal subunit. Contacts proteins S8 and S17. May interact with IF1 in the 30S initiation complex.

Functionally, with S4 and S5 plays an important role in translational accuracy. In terms of biological role, interacts with and stabilizes bases of the 16S rRNA that are involved in tRNA selection in the A site and with the mRNA backbone. Located at the interface of the 30S and 50S subunits, it traverses the body of the 30S subunit contacting proteins on the other side and probably holding the rRNA structure together. The combined cluster of proteins S8, S12 and S17 appears to hold together the shoulder and platform of the 30S subunit. This Shewanella baltica (strain OS223) protein is Small ribosomal subunit protein uS12.